The primary structure comprises 334 residues: Uroporphyrinogen decarboxylase (334 aa).

Residues 22–26 (RQVGR), Asp-71, Tyr-140, Ser-195, and His-310 contribute to the substrate site.

The protein belongs to the uroporphyrinogen decarboxylase family. Homodimer.

Its subcellular location is the cytoplasm. The enzyme catalyses uroporphyrinogen III + 4 H(+) = coproporphyrinogen III + 4 CO2. The protein operates within porphyrin-containing compound metabolism; protoporphyrin-IX biosynthesis; coproporphyrinogen-III from 5-aminolevulinate: step 4/4. In terms of biological role, catalyzes the decarboxylation of four acetate groups of uroporphyrinogen-III to yield coproporphyrinogen-III. This Chlamydia muridarum (strain MoPn / Nigg) protein is Uroporphyrinogen decarboxylase.